The primary structure comprises 371 residues: Trans-enoyl reductase calK (371 aa).

NADP(+) is bound at residue asparagine 51–lysine 54. A substrate-binding site is contributed by tryptophan 145–phenylalanine 152. NADP(+) contacts are provided by residues glycine 181 to serine 184, serine 204 to serine 207, tyrosine 222, and leucine 269 to glutamate 270. Residue glycine 289–leucine 293 participates in substrate binding. Valine 359–arginine 360 contacts NADP(+).

This sequence belongs to the zinc-containing alcohol dehydrogenase family. In terms of assembly, monomer.

Its pathway is secondary metabolite biosynthesis. Its function is as follows. Trans-enoyl reductase; part of the gene cluster that mediates the biosynthesis of calbistrin A and related compounds. Calbistrin A is a secondary metabolite with an interesting structure that was recently found to have bioactivity against leukemia cells. It consists of two polyketides linked by an ester bond: a bicyclic decalin containing polyketide and a linear 12 carbon dioic acid structure. The polyketide synthase calA is probably responsible for forming the decalin moiety. Because calA lacks a designated enoylreductase (ER) domain, the required activity is provided by the trans-enoyl reductase calK. Following release from the PKS, calF then probably catalyzes the oxidation and the subsequent Diels Alder cycloisomerization that lead to the formation of the decalin moiety. The decalin polyketide backbone includes two C-methyl groups, at C7 and C11 in backbone, of which the C7 position is probably methylated by the methyltransferase domain of calA. A candidate for adding the methyl group at C11, if not done by CalA, is the cluster methyltransferase calH. Several additional tailoring enzymes within the cluster could be involved in the modification of the decalin polyketide product. Those include the 3 cytochrome P450 monooxygenases CalE, CalG and CalL, of which one might be responsible for the introduction of the extra hydroxyl group attached to the backbone of the decalin moiety, at position C9 in the backbone, that allows for attachment of the linear moiety. One tailoring enzyme activity that is expected to be involved in biosynthesis of calbistrin is an acyltransferase for connecting the two polyketide synthase products, and which could be performed by the cluster acyltransferase calJ. The enzyme responsible for the biosynthesis of the linear moiety, probably a second PKS, has not been identified yet. The chain is Trans-enoyl reductase calK from Penicillium decumbens.